A 298-amino-acid chain; its full sequence is Arginine/serine-rich protein 1 (298 aa).

The tract at residues 1–135 (MSSAAMSKYV…SRSRSRGRSQ (135 aa)) is disordered. Ser-17 carries the post-translational modification Phosphoserine. Residues 23–36 (SPSTSGSGRSSRLS) show a composition bias toward low complexity. A compositionally biased stretch (basic residues) spans 60–105 (SRSHSRPRRSRRSRSRSRRRHQRKYRRYSRSYSRSRSRSRSHRYHR). Ser-118 and Ser-120 each carry phosphoserine. A compositionally biased stretch (basic residues) spans 124 to 135 (SRSRSRSRGRSQ). Arg-145 bears the Omega-N-methylarginine mark. Disordered stretches follow at residues 161–181 (RPRW…TPFR) and 218–298 (ASQG…WIPV). A compositionally biased stretch (polar residues) spans 219–228 (SQGTAVSSSG). Over residues 230 to 246 (KVEHSEKQTEDATKNTS) the composition is skewed to basic and acidic residues. A compositionally biased stretch (polar residues) spans 247-271 (EKSSTQRNIAFSSNNSVAKPLQKTT). Over residues 274 to 289 (AVEEKSSGSPKIDKKK) the composition is skewed to basic and acidic residues. Ser-282 carries the phosphoserine modification.

The protein belongs to the RSRP family. Phosphorylated. Phosphorylation at Ser-118 and Ser-120 mediates the interaction with spliceosome proteins.

It localises to the nucleus. Probably acts as a spliceosomal factor that contributes to spliceosome assembly and regulates the isoform switching of proteins such as PARP6. This chain is Arginine/serine-rich protein 1 (Rsrp1), found in Mus musculus (Mouse).